A 276-amino-acid chain; its full sequence is Membrane protein insertase YidC 2 (276 aa).

Residues Met-1–Ala-22 form the signal peptide. Cys-23 carries N-palmitoyl cysteine lipidation. A lipid anchor (S-diacylglycerol cysteine) is attached at Cys-23. 4 helical membrane passes run Ile-58–Val-78, Ser-130–Leu-150, Val-169–Leu-189, and Gly-207–Trp-227.

It belongs to the OXA1/ALB3/YidC family. Type 2 subfamily. As to quaternary structure, interacts with KhpB (also called EloR/Jag).

The protein resides in the cell membrane. Required for the insertion and/or proper folding and/or complex formation of integral membrane proteins into the membrane. Involved in integration of membrane proteins that insert both dependently and independently of the Sec translocase complex, as well as at least some lipoproteins. This chain is Membrane protein insertase YidC 2, found in Streptococcus pneumoniae (strain ATCC BAA-255 / R6).